The chain runs to 230 residues: UPF0758 protein ABC2615 (230 aa).

An MPN domain is found at 104-226 (VISSPEDAAE…FISLKERGFF (123 aa)). Positions 175, 177, and 188 each coordinate Zn(2+). The JAMM motif motif lies at 175–188 (HNHPSGDPSPSPED).

The protein belongs to the UPF0758 family.

This chain is UPF0758 protein ABC2615, found in Shouchella clausii (strain KSM-K16) (Alkalihalobacillus clausii).